The primary structure comprises 89 residues: Barrier-to-autointegration factor (89 aa).

Met1 bears the N-acetylmethionine mark. Thr2 carries the post-translational modification N-acetylthreonine; in Barrier-to-autointegration factor, N-terminally processed. Residues Thr2 and Thr3 each carry the phosphothreonine; by VRK1 and VRK2 modification. Ser4 carries the phosphoserine; by VRK1 and VRK2 modification. Residues Val20–Glu35 form the HhH domain.

It belongs to the BAF family. In terms of assembly, homodimer. Heterodimerizes with BANF2. Interacts with ANKLE2/LEM4, leading to decreased phosphorylation by VRK1 and promoting dephosphorylation by protein phosphatase 2A (PP2A). Binds non-specifically to double-stranded DNA, and is found as a hexamer or dodecamer upon DNA binding. Binds to LEM domain-containing nuclear proteins such as LEMD3/MAN1, TMPO/LAP2 and EMD (emerin). Interacts with ANKLE1 (via LEM domain); the interaction may favor BANF1 dimerization. Interacts with CRX and LMNA (lamin-A). Binds linker histone H1.1 and core histones H3. Interacts with LEMD2 (via LEM domain). Interacts with PARP1; interaction takes place in response to oxidative DNA damage. Post-translationally, ser-4 is the major site of phosphorylation as compared to Thr-2 and Thr-3. Phosphorylation on Thr-2; Thr-3 and Ser-4 disrupts its ability to bind DNA and reduces its ability to bind LEM domain-containing proteins. Non phosphorylated BAF seems to enhance binding between EMD and LMNA. Dephosphorylated by protein phosphatase 2A (PP2A) following interaction with ANKLE2/LEM4 during mitotic exit, leading to mitotic nuclear envelope reassembly.

It localises to the nucleus. It is found in the chromosome. The protein localises to the nucleus envelope. Its subcellular location is the cytoplasm. Its function is as follows. Non-specific DNA-binding protein that plays key roles in mitotic nuclear reassembly, chromatin organization, DNA damage response, gene expression and intrinsic immunity against foreign DNA. Contains two non-specific double-stranded DNA (dsDNA)-binding sites which promote DNA cross-bridging. Plays a key role in nuclear membrane reformation at the end of mitosis by driving formation of a single nucleus in a spindle-independent manner. Transiently cross-bridges anaphase chromosomes via its ability to bridge distant DNA sites, leading to the formation of a dense chromatin network at the chromosome ensemble surface that limits membranes to the surface. Also acts as a negative regulator of innate immune activation by restricting CGAS activity toward self-DNA upon acute loss of nuclear membrane integrity. Outcompetes CGAS for DNA-binding, thereby preventing CGAS activation and subsequent damaging autoinflammatory responses. Also involved in DNA damage response: interacts with PARP1 in response to oxidative stress, thereby inhibiting the ADP-ribosyltransferase activity of PARP1. Involved in the recognition of exogenous dsDNA in the cytosol: associates with exogenous dsDNA immediately after its appearance in the cytosol at endosome breakdown and is required to avoid autophagy. In case of poxvirus infection, has an antiviral activity by blocking viral DNA replication. The chain is Barrier-to-autointegration factor (BANF1) from Bos taurus (Bovine).